The sequence spans 686 residues: DNA gyrase subunit B (686 aa).

Over residues 1 to 27 the composition is skewed to polar residues; it reads MADSGNPNENNPSTDTGVNDAVSTSHG. The tract at residues 1–29 is disordered; it reads MADSGNPNENNPSTDTGVNDAVSTSHGDA. A Toprim domain is found at 465–579; sequence CEIFIVEGDS…SGHVYLSRPP (115 aa). Mg(2+) is bound by residues glutamate 471, aspartate 544, and aspartate 546.

Belongs to the type II topoisomerase GyrB family. Heterotetramer, composed of two GyrA and two GyrB chains. In the heterotetramer, GyrA contains the active site tyrosine that forms a transient covalent intermediate with DNA, while GyrB binds cofactors and catalyzes ATP hydrolysis. Mg(2+) serves as cofactor. It depends on Mn(2+) as a cofactor. Requires Ca(2+) as cofactor.

The protein resides in the cytoplasm. The catalysed reaction is ATP-dependent breakage, passage and rejoining of double-stranded DNA.. Its function is as follows. A type II topoisomerase that negatively supercoils closed circular double-stranded (ds) DNA in an ATP-dependent manner to modulate DNA topology and maintain chromosomes in an underwound state. Negative supercoiling favors strand separation, and DNA replication, transcription, recombination and repair, all of which involve strand separation. Also able to catalyze the interconversion of other topological isomers of dsDNA rings, including catenanes and knotted rings. Type II topoisomerases break and join 2 DNA strands simultaneously in an ATP-dependent manner. This is DNA gyrase subunit B from Streptomyces coelicolor (strain ATCC BAA-471 / A3(2) / M145).